Here is a 189-residue protein sequence, read N- to C-terminus: Protein GrpE (189 aa).

The interval Met1–Glu22 is disordered. Positions Gln10 to Glu22 are enriched in acidic residues.

The protein belongs to the GrpE family. As to quaternary structure, homodimer.

It localises to the cytoplasm. Participates actively in the response to hyperosmotic and heat shock by preventing the aggregation of stress-denatured proteins, in association with DnaK and GrpE. It is the nucleotide exchange factor for DnaK and may function as a thermosensor. Unfolded proteins bind initially to DnaJ; upon interaction with the DnaJ-bound protein, DnaK hydrolyzes its bound ATP, resulting in the formation of a stable complex. GrpE releases ADP from DnaK; ATP binding to DnaK triggers the release of the substrate protein, thus completing the reaction cycle. Several rounds of ATP-dependent interactions between DnaJ, DnaK and GrpE are required for fully efficient folding. In Leuconostoc citreum (strain KM20), this protein is Protein GrpE.